The sequence spans 83 residues: MPAIEVGRIAVIIAGRRAGQKVVVVDVIDKNFVLVTGAGLNKVKRRRMNVKHLEPLPERVNIERGADDEAVKAALEQAGISLE.

Belongs to the eukaryotic ribosomal protein eL14 family.

This is Large ribosomal subunit protein eL14 from Thermococcus onnurineus (strain NA1).